Consider the following 265-residue polypeptide: Hydroxyethylthiazole kinase 2 (265 aa).

Met-39 provides a ligand contact to substrate. Lys-115 and Thr-168 together coordinate ATP. Gly-195 contributes to the substrate binding site.

This sequence belongs to the Thz kinase family. Mg(2+) serves as cofactor.

It catalyses the reaction 5-(2-hydroxyethyl)-4-methylthiazole + ATP = 4-methyl-5-(2-phosphooxyethyl)-thiazole + ADP + H(+). The protein operates within cofactor biosynthesis; thiamine diphosphate biosynthesis; 4-methyl-5-(2-phosphoethyl)-thiazole from 5-(2-hydroxyethyl)-4-methylthiazole: step 1/1. Functionally, catalyzes the phosphorylation of the hydroxyl group of 4-methyl-5-beta-hydroxyethylthiazole (THZ). The protein is Hydroxyethylthiazole kinase 2 of Clostridium botulinum (strain Kyoto / Type A2).